Here is a 211-residue protein sequence, read N- to C-terminus: tRNA (guanine-N(7)-)-methyltransferase (211 aa).

Residues glutamate 44, aspartate 69, aspartate 96, and aspartate 118 each coordinate S-adenosyl-L-methionine. Aspartate 118 is a catalytic residue. Lysine 122 provides a ligand contact to substrate. The segment at 124–129 is interaction with RNA; it reads KHEKRR. Residues aspartate 154 and 191–194 each bind substrate; that span reads TEYE.

The protein belongs to the class I-like SAM-binding methyltransferase superfamily. TrmB family.

The enzyme catalyses guanosine(46) in tRNA + S-adenosyl-L-methionine = N(7)-methylguanosine(46) in tRNA + S-adenosyl-L-homocysteine. It participates in tRNA modification; N(7)-methylguanine-tRNA biosynthesis. Catalyzes the formation of N(7)-methylguanine at position 46 (m7G46) in tRNA. The sequence is that of tRNA (guanine-N(7)-)-methyltransferase from Streptococcus pyogenes serotype M12 (strain MGAS2096).